Consider the following 311-residue polypeptide: tRNA pseudouridine synthase B (311 aa).

Asp-52 acts as the Nucleophile in catalysis.

It belongs to the pseudouridine synthase TruB family. Type 1 subfamily.

The catalysed reaction is uridine(55) in tRNA = pseudouridine(55) in tRNA. Functionally, responsible for synthesis of pseudouridine from uracil-55 in the psi GC loop of transfer RNAs. This is tRNA pseudouridine synthase B from Burkholderia mallei (strain ATCC 23344).